The chain runs to 457 residues: Aromatic amino acid transport protein AroP (457 aa).

Over 1–19 (MMEGQQHGEQLKRGLKNRH) the chain is Cytoplasmic. The helical transmembrane segment at 20–40 (IQLIALGGAIGTGLFLGSASV) threads the bilayer. Residues 41–42 (IQ) lie on the Periplasmic side of the membrane. The chain crosses the membrane as a helical span at residues 43 to 63 (SAGPGIILGYAIAGFIAFLIM). The Cytoplasmic segment spans residues 64 to 86 (RQLGEMVVEEPVAGSFSHFAYKY). A helical membrane pass occupies residues 87 to 107 (WGSFAGFASGWNYWVLYVLVA). Residues 108-117 (MAELTAVGKY) lie on the Periplasmic side of the membrane. A helical transmembrane segment spans residues 118–138 (IQFWYPEIPTWVSAAVFFVVI). Residues 139–155 (NAINLTNVKVFGEMEFW) lie on the Cytoplasmic side of the membrane. A helical transmembrane segment spans residues 156–176 (FAIIKVIAVVAMIIFGGWLLF). Over 177 to 201 (SGNGGPQASVSNLWDQGGFLPHGFT) the chain is Periplasmic. A helical transmembrane segment spans residues 202-222 (GLVMMMAIIMFSFGGLELVGI). The Cytoplasmic segment spans residues 223-240 (TAAEADNPEQSIPKATNQ). A helical membrane pass occupies residues 241–261 (VIYRILIFYIGSLAVLLSLMP). Residues 262–271 (WTRVTADTSP) are Periplasmic-facing. Residues 272-292 (FVLIFHELGDTFVANALNIVV) form a helical membrane-spanning segment. Over 293-333 (LTAALSVYNSCVYCNSRMLFGLAQQGNAPKALASVDKRGVP) the chain is Cytoplasmic. A helical membrane pass occupies residues 334 to 354 (VNTILVSALVTALCVLINYLA). At 355–358 (PESA) the chain is on the periplasmic side. A helical transmembrane segment spans residues 359 to 379 (FGLLMALVVSALVINWAMISL). At 380–399 (AHMKFRRAKQEQGVVTRFPA) the chain is on the cytoplasmic side. Residues 400–420 (LLYPLGNWICLLFMAAVLVIM) traverse the membrane as a helical segment. At 421–425 (LMTPG) the chain is on the periplasmic side. Residues 426-446 (MAISVYLIPVWLIVLGIGYLF) form a helical membrane-spanning segment. Residues 447–457 (KEKTAKAVKAH) lie on the Cytoplasmic side of the membrane.

It belongs to the amino acid-polyamine-organocation (APC) superfamily. Amino acid transporter (AAT) (TC 2.A.3.1) family.

It is found in the cell inner membrane. It catalyses the reaction L-phenylalanine(in) + H(+)(in) = L-phenylalanine(out) + H(+)(out). It carries out the reaction L-tryptophan(in) + H(+)(in) = L-tryptophan(out) + H(+)(out). The catalysed reaction is L-tyrosine(in) + H(+)(in) = L-tyrosine(out) + H(+)(out). Permease that is involved in the active transport across the cytoplasmic membrane of all three aromatic amino acids, phenylalanine, tyrosine and tryptophan. The chain is Aromatic amino acid transport protein AroP (aroP) from Shigella flexneri.